Reading from the N-terminus, the 508-residue chain is Cytochrome P450 monooxygenase BipB (508 aa).

A helical transmembrane segment spans residues 11 to 31 (ELAWLLLGPLVLFYVFKLFIY). Residue Cys448 coordinates heme.

The protein belongs to the cytochrome P450 family. Heme serves as cofactor.

The protein localises to the membrane. It functions in the pathway sesquiterpene biosynthesis. Functionally, cytochrome P450 monooxygenase; part of the minimal biosynthetic bip cluster that mediates the biosynthesis of bridged polycyclic sesquiterpenoids derived from sativene, isosativene, and longifolene. The sesquiterpene cyclase BipA acts as a versatile cyclase that converts farnesyl diphosphate (FPP) into (-)-sativene as the dominant product and (-)-isosativene and (-)-longifolene as minor ones. The cytochrome P450 monooxygenase BipB then hydroxylates different enantiomeric sesquiterpenes, such as (-)-longifolene and (+)-longifolene, at C-15 and C-14. The C-15- or both C-15- and C-14-hydroxylated products are further oxidized by unclustered oxidases, resulting in a structurally diverse array of sesquiterpenoids. The BipB-catalyzed hydroxylation at C-15 serves as an initiator for the oxidation by the unclustered oxidases. The chain is Cytochrome P450 monooxygenase BipB from Cochliobolus sativus (Common root rot and spot blotch fungus).